The following is a 77-amino-acid chain: uncharacterized protein (77 aa).

The protein localises to the plastid. It is found in the cyanelle. This is an uncharacterized protein from Cyanophora paradoxa.